The primary structure comprises 172 residues: MIRNIGSNLMKSSSSILLRNQQQQTNKLLFRNFTSIPEAVAVTSEESYNSKNQFTPIGKDSFAVVHISGKQYKVIEGDIIMTDKIQVDVGEHIVLDKVLLVGTKNETIIGKPIISNFKVHAYIEEQAKTEHVTIFKHKPRKNYKRTTGFQGLATYIRIGGIIKGQETTTTTN.

The N-terminal 20 residues, 1-20 (MIRNIGSNLMKSSSSILLRN), are a transit peptide targeting the mitochondrion.

This sequence belongs to the bacterial ribosomal protein bL21 family.

It localises to the mitochondrion. The chain is Large ribosomal subunit protein bL21m (mrpl21) from Dictyostelium discoideum (Social amoeba).